The sequence spans 465 residues: Ribulose bisphosphate carboxylase large chain (465 aa).

N6,N6,N6-trimethyllysine is present on Lys-4. Residues Asn-113 and Thr-163 each contribute to the substrate site. Lys-165 acts as the Proton acceptor in catalysis. Residue Lys-167 participates in substrate binding. The Mg(2+) site is built by Lys-191, Asp-193, and Glu-194. The residue at position 191 (Lys-191) is an N6-carboxylysine. His-284 (proton acceptor) is an active-site residue. Substrate-binding residues include Arg-285, His-317, and Ser-369.

Belongs to the RuBisCO large chain family. Type I subfamily. Heterohexadecamer of 8 large chains and 8 small chains; disulfide-linked. The disulfide link is formed within the large subunit homodimers. Mg(2+) is required as a cofactor. In terms of processing, the disulfide bond which can form in the large chain dimeric partners within the hexadecamer appears to be associated with oxidative stress and protein turnover.

The protein resides in the plastid. The protein localises to the chloroplast. It catalyses the reaction 2 (2R)-3-phosphoglycerate + 2 H(+) = D-ribulose 1,5-bisphosphate + CO2 + H2O. The enzyme catalyses D-ribulose 1,5-bisphosphate + O2 = 2-phosphoglycolate + (2R)-3-phosphoglycerate + 2 H(+). In terms of biological role, ruBisCO catalyzes two reactions: the carboxylation of D-ribulose 1,5-bisphosphate, the primary event in carbon dioxide fixation, as well as the oxidative fragmentation of the pentose substrate in the photorespiration process. Both reactions occur simultaneously and in competition at the same active site. This chain is Ribulose bisphosphate carboxylase large chain, found in Securidaca diversifolia (Easter flower).